The sequence spans 1373 residues: DNA-directed RNA polymerase subunit beta (1373 aa).

Belongs to the RNA polymerase beta chain family. As to quaternary structure, the RNAP catalytic core consists of 2 alpha, 1 beta, 1 beta' and 1 omega subunit. When a sigma factor is associated with the core the holoenzyme is formed, which can initiate transcription.

It carries out the reaction RNA(n) + a ribonucleoside 5'-triphosphate = RNA(n+1) + diphosphate. Functionally, DNA-dependent RNA polymerase catalyzes the transcription of DNA into RNA using the four ribonucleoside triphosphates as substrates. The chain is DNA-directed RNA polymerase subunit beta from Rickettsia canadensis (strain McKiel).